The following is a 388-amino-acid chain: Succinate--CoA ligase [ADP-forming] subunit beta (388 aa).

In terms of domain architecture, ATP-grasp spans 9–245; the sequence is KELLAGYGLP…KSQENERELK (237 aa). ATP-binding positions include lysine 46, 53-55, glutamate 100, tyrosine 103, and glutamate 108; that span reads GRG. Mg(2+) contacts are provided by asparagine 200 and aspartate 214. Substrate is bound by residues asparagine 265 and 322 to 324; that span reads GIV.

It belongs to the succinate/malate CoA ligase beta subunit family. In terms of assembly, heterotetramer of two alpha and two beta subunits. The cofactor is Mg(2+).

It catalyses the reaction succinate + ATP + CoA = succinyl-CoA + ADP + phosphate. It carries out the reaction GTP + succinate + CoA = succinyl-CoA + GDP + phosphate. It functions in the pathway carbohydrate metabolism; tricarboxylic acid cycle; succinate from succinyl-CoA (ligase route): step 1/1. Functionally, succinyl-CoA synthetase functions in the citric acid cycle (TCA), coupling the hydrolysis of succinyl-CoA to the synthesis of either ATP or GTP and thus represents the only step of substrate-level phosphorylation in the TCA. The beta subunit provides nucleotide specificity of the enzyme and binds the substrate succinate, while the binding sites for coenzyme A and phosphate are found in the alpha subunit. This chain is Succinate--CoA ligase [ADP-forming] subunit beta, found in Neisseria meningitidis serogroup C / serotype 2a (strain ATCC 700532 / DSM 15464 / FAM18).